A 172-amino-acid chain; its full sequence is Shikimate kinase (172 aa).

ATP is bound at residue 14 to 19 (GAGKST). Position 18 (S18) interacts with Mg(2+). Substrate-binding residues include D36, R60, and G82. R120 provides a ligand contact to ATP. Residue R139 coordinates substrate. ATP is bound at residue Q156.

The protein belongs to the shikimate kinase family. In terms of assembly, monomer. The cofactor is Mg(2+).

Its subcellular location is the cytoplasm. It carries out the reaction shikimate + ATP = 3-phosphoshikimate + ADP + H(+). It participates in metabolic intermediate biosynthesis; chorismate biosynthesis; chorismate from D-erythrose 4-phosphate and phosphoenolpyruvate: step 5/7. In terms of biological role, catalyzes the specific phosphorylation of the 3-hydroxyl group of shikimic acid using ATP as a cosubstrate. The chain is Shikimate kinase from Vibrio parahaemolyticus serotype O3:K6 (strain RIMD 2210633).